The following is a 586-amino-acid chain: Eukaryotic translation initiation factor 3 subunit D (586 aa).

A disordered region spans residues 102–176 (SAKRTFGRGG…DKPQRTREPS (75 aa)). Residues 162-174 (GWKDYDKPQRTRE) are compositionally biased toward basic and acidic residues. The tract at residues 301-315 (SLDLVTVNENAADAP) is RNA gate. Positions 567 to 586 (EEEEEVAAEEQEAAEEEAEE) are disordered.

Belongs to the eIF-3 subunit D family. As to quaternary structure, component of the eukaryotic translation initiation factor 3 (eIF-3) complex.

It localises to the cytoplasm. Functionally, mRNA cap-binding component of the eukaryotic translation initiation factor 3 (eIF-3) complex, which is involved in protein synthesis of a specialized repertoire of mRNAs and, together with other initiation factors, stimulates binding of mRNA and methionyl-tRNAi to the 40S ribosome. The eIF-3 complex specifically targets and initiates translation of a subset of mRNAs involved in cell proliferation. In the eIF-3 complex, eif3d specifically recognizes and binds the 7-methylguanosine cap of a subset of mRNAs. The chain is Eukaryotic translation initiation factor 3 subunit D from Aspergillus niger (strain ATCC MYA-4892 / CBS 513.88 / FGSC A1513).